The primary structure comprises 270 residues: Phosphatidylglycerol--prolipoprotein diacylglyceryl transferase (270 aa).

A run of 7 helical transmembrane segments spans residues 14–34 (VIFE…LLGF), 60–80 (LLFN…VLFY), 95–115 (VWEG…AMLI), 128–148 (ADFV…GNFI), 176–196 (SQLY…NWYI), 202–222 (IGAT…IVEF), and 238–258 (ISMG…IMLV). Arginine 143 lines the a 1,2-diacyl-sn-glycero-3-phospho-(1'-sn-glycerol) pocket.

Belongs to the Lgt family.

Its subcellular location is the cell inner membrane. It catalyses the reaction L-cysteinyl-[prolipoprotein] + a 1,2-diacyl-sn-glycero-3-phospho-(1'-sn-glycerol) = an S-1,2-diacyl-sn-glyceryl-L-cysteinyl-[prolipoprotein] + sn-glycerol 1-phosphate + H(+). Its pathway is protein modification; lipoprotein biosynthesis (diacylglyceryl transfer). Functionally, catalyzes the transfer of the diacylglyceryl group from phosphatidylglycerol to the sulfhydryl group of the N-terminal cysteine of a prolipoprotein, the first step in the formation of mature lipoproteins. The sequence is that of Phosphatidylglycerol--prolipoprotein diacylglyceryl transferase from Pasteurella multocida (strain Pm70).